The sequence spans 132 residues: Vacuolar protein sorting-associated protein 55 homolog (132 aa).

4 consecutive transmembrane segments (helical) span residues 7–27 (VAALAFAGVVGLTFLVLGCAL), 32–52 (TWTPMFVITFYVLSPVPLLIA), 68–88 (LALFITTGIVISAFALPIVLA), and 98–118 (CFLVNTGSVIMFGTIIAYFYL).

It belongs to the OB-RGRP/VPS55 family.

The protein localises to the endosome membrane. In terms of biological role, involved in endosomal protein transport. In Caenorhabditis elegans, this protein is Vacuolar protein sorting-associated protein 55 homolog.